The following is an 861-amino-acid chain: Leucine--tRNA ligase (861 aa).

The short motif at 42–52 (PYPSGRIHMGH) is the 'HIGH' region element. Positions 623 to 627 (KMSKS) match the 'KMSKS' region motif. Lys-626 serves as a coordination point for ATP.

Belongs to the class-I aminoacyl-tRNA synthetase family.

Its subcellular location is the cytoplasm. It carries out the reaction tRNA(Leu) + L-leucine + ATP = L-leucyl-tRNA(Leu) + AMP + diphosphate. The sequence is that of Leucine--tRNA ligase from Caulobacter vibrioides (strain ATCC 19089 / CIP 103742 / CB 15) (Caulobacter crescentus).